We begin with the raw amino-acid sequence, 501 residues long: GMP synthase [glutamine-hydrolyzing] (501 aa).

One can recognise a Glutamine amidotransferase type-1 domain in the interval 1-185 (MVLVVDYGSQ…LFNVCKLEKN (185 aa)). The active-site Nucleophile is the Cys-75. Active-site residues include His-159 and Glu-161. The GMPS ATP-PPase domain maps to 186–376 (WKIGDLVEEK…LGIPDRIINR (191 aa)). 213-219 (SGGVDSS) contributes to the ATP binding site.

In terms of assembly, homodimer.

It carries out the reaction XMP + L-glutamine + ATP + H2O = GMP + L-glutamate + AMP + diphosphate + 2 H(+). The protein operates within purine metabolism; GMP biosynthesis; GMP from XMP (L-Gln route): step 1/1. Catalyzes the synthesis of GMP from XMP. The polypeptide is GMP synthase [glutamine-hydrolyzing] (Thermotoga petrophila (strain ATCC BAA-488 / DSM 13995 / JCM 10881 / RKU-1)).